Here is a 568-residue protein sequence, read N- to C-terminus: Tetratricopeptide repeat protein 22 (568 aa).

7 TPR repeats span residues 66–99 (PAVR…DPGN), 101–133 (NAWA…MGLE), 155–190 (YAHG…GQQI), 203–237 (ATLF…LGEV), 260–294 (KDTF…AKNQ), 296–328 (PILN…LTDP), and 432–465 (PELQ…DDEG).

The chain is Tetratricopeptide repeat protein 22 (Ttc22) from Mus musculus (Mouse).